An 845-amino-acid polypeptide reads, in one-letter code: Envelope glycoprotein B (845 aa).

Positions 1-26 (MTPRSRLATLGTVILLVCFCAGAAHS) are cleaved as a signal peptide. At 27–732 (RGDTFQTSSS…TGFINFIKHP (706 aa)) the chain is on the virion surface side. The tract at residues 29-57 (DTFQTSSSPTPPGSSSKAPTKPGEEASGP) is disordered. Residues 33-49 (TSSSPTPPGSSSKAPTK) are compositionally biased toward low complexity. Disulfide bonds link Cys-68–Cys-528, Cys-85–Cys-484, Cys-157–Cys-222, Cys-315–Cys-362, and Cys-550–Cys-587. The segment at 124 to 130 (VYRGLTE) is involved in fusion and/or binding to host membrane. The N-linked (GlcNAc...) asparagine; by host glycan is linked to Asn-179. Residues 208 to 216 (GWFPGIYRV) are involved in fusion and/or binding to host membrane. Asn-254, Asn-275, Asn-355, Asn-368, Asn-372, Asn-385, and Asn-408 each carry an N-linked (GlcNAc...) asparagine; by host glycan. The tract at residues 411–451 (HAQGDSGNPTSSPPPSASPMTTSASRRKRRSASTAAAGGGG) is disordered. Asn-455, Asn-562, Asn-599, Asn-614, and Asn-628 each carry an N-linked (GlcNAc...) asparagine; by host glycan. Positions 678–730 (LDNTIDMNKERFVRDLSEIVADLGGIGKTVVNVASSVVTLCGSLVTGFINFIK) are hydrophobic membrane proximal region. The helical transmembrane segment at 733-753 (LGGMLMIIIVIAIILIIFMLS) threads the bilayer. The Intravirion segment spans residues 754-845 (RRTNTIAQAP…SLDISPETGE (92 aa)). The interval 802–845 (RQKADDLKKSTPSVFQRTANGLRQRLRGYKPLTQSLDISPETGE) is disordered. Polar residues predominate over residues 811 to 822 (STPSVFQRTANG). Positions 830 to 833 (YKPL) match the Internalization motif motif.

It belongs to the herpesviridae glycoprotein B family. In terms of assembly, homotrimer; disulfide-linked. Binds to heparan sulfate proteoglycans. Interacts with gH/gL heterodimer. Interacts with host ITGAV-ITGB3; this interaction mediates viral entry. Post-translationally, a proteolytic cleavage by host furin generates two subunits that remain linked by disulfide bonds.

Its subcellular location is the virion membrane. It is found in the host cell membrane. It localises to the host endosome membrane. The protein resides in the host Golgi apparatus membrane. Envelope glycoprotein that forms spikes at the surface of the virion envelope. Participates in viral entry through an RGD motif that binds ITGAV-ITGB3. Membrane fusion is mediated by the fusion machinery composed at least of gB and the heterodimer gH/gL. May be involved in the fusion between the virion envelope and the outer nuclear membrane during virion egress. The polypeptide is Envelope glycoprotein B (Homo sapiens (Human)).